A 311-amino-acid chain; its full sequence is Porphobilinogen deaminase (311 aa).

S-(dipyrrolylmethanemethyl)cysteine is present on cysteine 241.

The protein belongs to the HMBS family. As to quaternary structure, monomer. The cofactor is dipyrromethane.

The catalysed reaction is 4 porphobilinogen + H2O = hydroxymethylbilane + 4 NH4(+). Its pathway is porphyrin-containing compound metabolism; protoporphyrin-IX biosynthesis; coproporphyrinogen-III from 5-aminolevulinate: step 2/4. Its function is as follows. Tetrapolymerization of the monopyrrole PBG into the hydroxymethylbilane pre-uroporphyrinogen in several discrete steps. This Carboxydothermus hydrogenoformans (strain ATCC BAA-161 / DSM 6008 / Z-2901) protein is Porphobilinogen deaminase.